Reading from the N-terminus, the 60-residue chain is Large ribosomal subunit protein uL30 (60 aa).

The protein belongs to the universal ribosomal protein uL30 family. In terms of assembly, part of the 50S ribosomal subunit.

In Flavobacterium johnsoniae (strain ATCC 17061 / DSM 2064 / JCM 8514 / BCRC 14874 / CCUG 350202 / NBRC 14942 / NCIMB 11054 / UW101) (Cytophaga johnsonae), this protein is Large ribosomal subunit protein uL30.